A 132-amino-acid chain; its full sequence is Histone H2A.2 (132 aa).

It belongs to the histone H2A family. As to quaternary structure, the nucleosome is a histone octamer containing two molecules each of H2A, H2B, H3 and H4 assembled in one H3-H4 heterotetramer and two H2A-H2B heterodimers. The octamer wraps approximately 147 bp of DNA.

It localises to the nucleus. Its subcellular location is the chromosome. Functionally, core component of nucleosome. Nucleosomes wrap and compact DNA into chromatin, limiting DNA accessibility to the cellular machineries which require DNA as a template. Histones thereby play a central role in transcription regulation, DNA repair, DNA replication and chromosomal stability. DNA accessibility is regulated via a complex set of post-translational modifications of histones, also called histone code, and nucleosome remodeling. This is Histone H2A.2 from Leishmania infantum.